Reading from the N-terminus, the 903-residue chain is Alanine--tRNA ligase (903 aa).

The Zn(2+) site is built by His-591, His-595, Cys-695, and His-699.

This sequence belongs to the class-II aminoacyl-tRNA synthetase family. It depends on Zn(2+) as a cofactor.

The protein resides in the cytoplasm. The catalysed reaction is tRNA(Ala) + L-alanine + ATP = L-alanyl-tRNA(Ala) + AMP + diphosphate. Functionally, catalyzes the attachment of alanine to tRNA(Ala) in a two-step reaction: alanine is first activated by ATP to form Ala-AMP and then transferred to the acceptor end of tRNA(Ala). Also edits incorrectly charged Ser-tRNA(Ala) and Gly-tRNA(Ala) via its editing domain. The protein is Alanine--tRNA ligase of Methanosphaera stadtmanae (strain ATCC 43021 / DSM 3091 / JCM 11832 / MCB-3).